Consider the following 344-residue polypeptide: N-acetyl-gamma-glutamyl-phosphate reductase (344 aa).

C150 is an active-site residue.

This sequence belongs to the NAGSA dehydrogenase family. Type 1 subfamily.

Its subcellular location is the cytoplasm. It carries out the reaction N-acetyl-L-glutamate 5-semialdehyde + phosphate + NADP(+) = N-acetyl-L-glutamyl 5-phosphate + NADPH + H(+). Its pathway is amino-acid biosynthesis; L-arginine biosynthesis; N(2)-acetyl-L-ornithine from L-glutamate: step 3/4. Catalyzes the NADPH-dependent reduction of N-acetyl-5-glutamyl phosphate to yield N-acetyl-L-glutamate 5-semialdehyde. In Pseudomonas aeruginosa (strain UCBPP-PA14), this protein is N-acetyl-gamma-glutamyl-phosphate reductase.